A 355-amino-acid chain; its full sequence is Elongation factor Ts (355 aa).

Residues 82–85 (TDFV) form an involved in Mg(2+) ion dislocation from EF-Tu region.

The protein belongs to the EF-Ts family.

Its subcellular location is the cytoplasm. Its function is as follows. Associates with the EF-Tu.GDP complex and induces the exchange of GDP to GTP. It remains bound to the aminoacyl-tRNA.EF-Tu.GTP complex up to the GTP hydrolysis stage on the ribosome. This is Elongation factor Ts from Helicobacter acinonychis (strain Sheeba).